A 609-amino-acid chain; its full sequence is Protein alan shepard (609 aa).

The span at 1–12 shows a compositional bias: pro residues; that stretch reads MHPRYSPAPPPL. Positions 1 to 96 are disordered; sequence MHPRYSPAPP…ASVAAAPPTP (96 aa). Residue tyrosine 5 is modified to Phosphotyrosine. The segment covering 13 to 35 has biased composition (low complexity); sequence HQQQQQQPPQQQQQQMGGPHQQQ. Over residues 37–50 the composition is skewed to gly residues; sequence GGVGPGTGHGGVGA. 2 stretches are compositionally biased toward low complexity: residues 51–68 and 83–92; these read AVGASNAGHMRAPPNSQQ and SSSAASVAAA. Phosphotyrosine occurs at positions 152 and 168. Positions 190–252 are disordered; it reads PATTTYGQRV…AQNQNQQGGE (63 aa). A compositionally biased stretch (low complexity) spans 204-252; the sequence is SPSNTNSSSSSNTGSQSGTLSTSLSNTTNTNTTMGPNGTAQNQNQQGGE. 2 consecutive RRM domains span residues 257–330 and 336–415; these read TNLY…MAKQ and TNLY…FADG. A disordered region spans residues 583–609; the sequence is MTDSEQASTAASPDEAYTQYPHQAAPK.

Its function is as follows. Has a role in the perception of gravity. The chain is Protein alan shepard from Drosophila grimshawi (Hawaiian fruit fly).